We begin with the raw amino-acid sequence, 86 residues long: Small ribosomal subunit protein eS21 (86 aa).

The protein belongs to the eukaryotic ribosomal protein eS21 family. In terms of assembly, component of the 40S small ribosomal subunit.

The protein resides in the cytoplasm. Its subcellular location is the cytosol. It is found in the rough endoplasmic reticulum. The polypeptide is Small ribosomal subunit protein eS21 (RPS21) (Suberites domuncula (Sponge)).